The primary structure comprises 136 residues: Peptide methionine sulfoxide reductase B5 (136 aa).

The MsrB domain occupies 14-135 (DEEWRAVLSP…NSVSIKFTPA (122 aa)). Zn(2+) is bound by residues C53, C56, C99, and C102. C71 and C124 are disulfide-bonded. The Nucleophile role is filled by C124.

The protein belongs to the MsrB Met sulfoxide reductase family. The cofactor is Zn(2+).

It is found in the cytoplasm. The protein localises to the cytosol. The catalysed reaction is L-methionyl-[protein] + [thioredoxin]-disulfide + H2O = L-methionyl-(R)-S-oxide-[protein] + [thioredoxin]-dithiol. In terms of biological role, catalyzes the reduction of methionine sulfoxide (MetSO) to methionine in proteins. Plays a protective role against oxidative stress by restoring activity to proteins that have been inactivated by methionine oxidation. MSRB family specifically reduces the MetSO R-enantiomer. This Oryza sativa subsp. japonica (Rice) protein is Peptide methionine sulfoxide reductase B5 (MSRB5).